The chain runs to 179 residues: Large ribosomal subunit protein uL6 (179 aa).

Belongs to the universal ribosomal protein uL6 family. Part of the 50S ribosomal subunit.

Its function is as follows. This protein binds to the 23S rRNA, and is important in its secondary structure. It is located near the subunit interface in the base of the L7/L12 stalk, and near the tRNA binding site of the peptidyltransferase center. This chain is Large ribosomal subunit protein uL6, found in Synechocystis sp. (strain ATCC 27184 / PCC 6803 / Kazusa).